Consider the following 204-residue polypeptide: Putative AgrB-like protein (204 aa).

4 helical membrane passes run 40–60 (IILINVMKFAIVYGISLATGL), 87–107 (LNCTLISLAMFVLAPFVFQNI), 111–131 (NWIVLGTFAFILLNMFLFAPA), and 156–176 (LILTGIALLIPFAEMKTLIMV).

This sequence belongs to the AgrB family.

It localises to the cell membrane. Functionally, may be involved in the proteolytic processing of a quorum sensing system signal molecule precursor. This Listeria welshimeri serovar 6b (strain ATCC 35897 / DSM 20650 / CCUG 15529 / CIP 8149 / NCTC 11857 / SLCC 5334 / V8) protein is Putative AgrB-like protein.